The following is a 104-amino-acid chain: Large ribosomal subunit protein uL24 (104 aa).

This sequence belongs to the universal ribosomal protein uL24 family. In terms of assembly, part of the 50S ribosomal subunit.

Functionally, one of two assembly initiator proteins, it binds directly to the 5'-end of the 23S rRNA, where it nucleates assembly of the 50S subunit. In terms of biological role, one of the proteins that surrounds the polypeptide exit tunnel on the outside of the subunit. The chain is Large ribosomal subunit protein uL24 from Psychromonas ingrahamii (strain DSM 17664 / CCUG 51855 / 37).